The chain runs to 198 residues: Ribonuclease HII (198 aa).

The RNase H type-2 domain maps to Asn11–Val198. The a divalent metal cation site is built by Asp17, Glu18, and Asp109.

The protein belongs to the RNase HII family. It depends on Mn(2+) as a cofactor. The cofactor is Mg(2+).

The protein localises to the cytoplasm. The catalysed reaction is Endonucleolytic cleavage to 5'-phosphomonoester.. Functionally, endonuclease that specifically degrades the RNA of RNA-DNA hybrids. This is Ribonuclease HII from Yersinia pseudotuberculosis serotype O:1b (strain IP 31758).